Consider the following 118-residue polypeptide: Ribonuclease P protein component (118 aa).

Belongs to the RnpA family. As to quaternary structure, consists of a catalytic RNA component (M1 or rnpB) and a protein subunit.

The catalysed reaction is Endonucleolytic cleavage of RNA, removing 5'-extranucleotides from tRNA precursor.. Functionally, RNaseP catalyzes the removal of the 5'-leader sequence from pre-tRNA to produce the mature 5'-terminus. It can also cleave other RNA substrates such as 4.5S RNA. The protein component plays an auxiliary but essential role in vivo by binding to the 5'-leader sequence and broadening the substrate specificity of the ribozyme. The chain is Ribonuclease P protein component from Shewanella baltica (strain OS155 / ATCC BAA-1091).